A 359-amino-acid chain; its full sequence is Pheromone receptor 1 (359 aa).

Transmembrane regions (helical) follow at residues 5-25, 33-53, 71-87, 110-130, 147-167, 206-226, and 268-288; these read VTPF…GWHI, ITLS…SVAW, LRHA…LVIA, IIID…LMIV, FLSL…IVSF, LLVL…GSVS, and LILS…MFGL. The disordered stretch occupies residues 335 to 359; the sequence is TSGGIDGSPHSEKFSINTPTKYEEA. Positions 348 to 359 are enriched in polar residues; it reads FSINTPTKYEEA.

This sequence belongs to the G-protein coupled receptor 4 family.

Its subcellular location is the membrane. Its function is as follows. Receptor for the A2 pheromone, a prenylated mating factor. This Ustilago hordei (Barley covered smut fungus) protein is Pheromone receptor 1 (PRA1).